The sequence spans 349 residues: Threonine-rich protein (349 aa).

The first 19 residues, 1–19, serve as a signal peptide directing secretion; the sequence is MKGLTLACIAATVVAASHA. N257 carries N-linked (GlcNAc...) asparagine glycosylation. The disordered stretch occupies residues 300–326; that stretch reads QPDVSPMSVRKRRQAESAEEDDDLVGD. Positions 316–326 are enriched in acidic residues; the sequence is SAEEDDDLVGD. Positions 316 to 349 form a coiled coil; it reads SAEEDDDLVGDMEDLKELEQEIQEALEEVEKLDV.

As to expression, component of the acid-insoluble and acid-soluble organic matrix of calcified layers of the shell (at protein level).

It is found in the secreted. This is Threonine-rich protein from Lottia gigantea (Giant owl limpet).